A 284-amino-acid chain; its full sequence is Genome polyprotein (284 aa).

2 disordered regions span residues 16–57 (HQAN…GTSG) and 255–284 (GIST…GKNM). The span at 35 to 44 (EQSSIQSNLS) shows a compositional bias: polar residues.

Belongs to the potyviridae genome polyprotein family. Post-translationally, genome polyprotein of potyviruses undergoes post-translational proteolytic processing by the main proteinase NIa-pro resulting in the production of at least ten individual proteins. The P1 proteinase and the HC-pro cleave only their respective C-termini autocatalytically. 6K1 is essential for proper proteolytic separation of P3 from CI.

It is found in the virion. The enzyme catalyses RNA(n) + a ribonucleoside 5'-triphosphate = RNA(n+1) + diphosphate. Functionally, an RNA-dependent RNA polymerase that plays an essential role in the virus replication. Its function is as follows. Involved in aphid transmission, cell-to-cell and systemis movement, encapsidation of the viral RNA and in the regulation of viral RNA amplification. This chain is Genome polyprotein, found in Capsicum (peppers).